The primary structure comprises 452 residues: Imidazoleglycerol-phosphate dehydratase (452 aa).

The interval 1-233 (MASPVQALLL…VGASVVLTPG (233 aa)) is unknown activity. The interval 234–452 (LGELLDLVPA…GVPSTKGVLA (219 aa)) is imidazoleglycerol-phosphate dehydratase.

This sequence belongs to the imidazoleglycerol-phosphate dehydratase family.

The catalysed reaction is D-erythro-1-(imidazol-4-yl)glycerol 3-phosphate = 3-(imidazol-4-yl)-2-oxopropyl phosphate + H2O. The protein operates within amino-acid biosynthesis; L-histidine biosynthesis; L-histidine from 5-phospho-alpha-D-ribose 1-diphosphate: step 6/9. This is Imidazoleglycerol-phosphate dehydratase (HIS3) from Phytophthora nicotianae (Potato buckeye rot agent).